The chain runs to 146 residues: Hydroxyproline-rich systemin (146 aa).

The first 24 residues, 1–24 (MISFFRAFFLIIIISFLIFVGAQA), serve as a signal peptide directing secretion. Residues 25 to 48 (RTLLGNYHDDEMLIELKLESGNYG) constitute a propeptide that is removed on maturation. A disordered region spans residues 47 to 128 (YGRTPYKTPP…PPPPKPQDEQ (82 aa)). 4-hydroxyproline occurs at positions 51, 55, 56, 57, 58, and 63. Proline 51, proline 55, proline 56, proline 57, proline 58, and proline 63 each carry an O-linked (Ara...) hydroxyproline glycan. Residues 67–70 (EIVN) constitute a propeptide that is removed on maturation. Proline 79, proline 80, and proline 82 each carry 4-hydroxyproline. O-linked (Ara...) hydroxyproline glycans are attached at residues proline 79, proline 80, and proline 82. The propeptide occupies 86–110 (PIIGQLTTITTTPHHDDTVAAPPVG). 4 positions are modified to 4-hydroxyproline: proline 119, proline 120, proline 121, and proline 122. O-linked (Ara...) hydroxyproline glycosylation is found at proline 119, proline 120, proline 121, and proline 122. A propeptide spanning residues 131–146 (IIITSSSSTLPLQASY) is cleaved from the precursor.

In terms of processing, O-glycosylated; contains pentose side chains. Leaves.

Its subcellular location is the secreted. Activates a lipid-based signal transduction pathway in which linolenic acid is converted to jasmonic acid, a potent activator of defense gene transcription. Induces synthesis of proteinase inhibitors I and II in leaves when supplied through cut stems. This chain is Hydroxyproline-rich systemin, found in Solanum lycopersicum (Tomato).